The following is a 1384-amino-acid chain: Protein Gawky (1384 aa).

Disordered regions lie at residues 1–99 (MREA…VWTG), 148–227 (NGSS…DPRG), 263–335 (TAST…DDGT), and 447–501 (VGAP…SGWS). Residues 1-205 (MREALFSQDG…HRGGNGSGAT (205 aa)) are required for interaction with AGO1. Sufficient for miRNA-mediated silencing regions lie at residues 1-605 (MREA…SLGS) and 605-830 (SYAD…SVHL). The span at 15-24 (HVNQDTNWEV) shows a compositional bias: polar residues. The segment covering 150-171 (SSNITGSSGVATGSSGNSSNAG) has biased composition (low complexity). Positions 205 to 490 (TSSDPRDIRM…GVSWGNKQSK (286 aa)) are minimal N-terminal region required for miRNA-mediated silencing. The span at 208-225 (DPRDIRMIDPRDPIRGDP) shows a compositional bias: basic and acidic residues. Polar residues-rich tracts occupy residues 449-475 (APSS…NSWS) and 485-501 (GNKQ…SGWS). A UBA domain is found at 547-588 (IIKQSKQYRILVENGFKKEDVERALVIANMNIEEAADMLRAN). Disordered stretches follow at residues 607 to 626 (ADHN…PVNS), 809 to 841 (QNMQ…LRGH), 889 to 942 (TEFS…NKDW), 962 to 1022 (EPGK…LSSS), 1052 to 1102 (TSPL…GVQT), 1188 to 1221 (SENE…GVGT), and 1318 to 1368 (GTAN…PSGR). Residues 809 to 826 (QNMQPTSQQQQPQQQQLP) show a composition bias toward low complexity. Residues 862 to 1115 (YQGASNQQSR…NWTGGNTTWG (254 aa)) are not required for interaction with AGO1 or miRNAs or for localization to P-bodies but necessary for miRNA-mediated silencing and for interaction with pAbp. Over residues 898 to 924 (TKQNLTANTSNINSLGLQNDSTWSTGR) the composition is skewed to polar residues. The interval 940–1215 (KDWSVAQPTS…TSSSGTSGGN (276 aa)) is sufficient for miRNA-mediated silencing. The span at 1010-1022 (SPTDLPPLSLSSS) shows a compositional bias: low complexity. A compositionally biased stretch (polar residues) spans 1052-1061 (TSPLNKSSSR). Residues 1068-1084 (TANSNKSANSNASTPTT) are compositionally biased toward low complexity. The region spanning 1117 to 1189 (SWLLLKNLTA…TTIFAESPSE (73 aa)) is the RRM domain. Positions 1188 to 1203 (SENEVQSIMQHLPQTP) are enriched in polar residues. Residues 1200-1384 (PQTPSSTSSS…ISLVYSIVDD (185 aa)) form a not required for interaction with AGO1 or miRNAs or for localization to P-bodies but necessary for miRNA-mediated silencing, dissociation from AGO1 and miRNAs and interaction with pAbp region. Over residues 1211 to 1220 (TSGGNVGGVG) the composition is skewed to gly residues. Residues 1318–1349 (GTANSSGSKSSANNLASGQSSASNLTNSTNST) show a composition bias toward low complexity. Positions 1350 to 1365 (WRQTSQNQALQSQSRP) are enriched in polar residues.

The protein belongs to the GW182 family. In terms of assembly, component of the miRNA-directed RNA-induced silencing complex (miRISC), composed of at least AGO1 and gw, which bind mature miRNAs and targets the selective destruction of homologous RNAs. Interacts (via N-terminal region) with AGO1 (via Piwi domain); the interaction is essential for localization of AGO1 in P-bodies and for miRNA-mediated silencing. Interacts with pAbp/PABPC1; this interaction interferes with the binding of pAbp to eIF4G and is required for miRNA-mediated silencing. Interacts with CCR4-NOT complex members Not1, Rga/NOT2, twin/CCR4, Pop2 and NOT3/5 and with PAN complex members CG8232/PAN2 and CG11486/PAN3.

The protein localises to the cytoplasm. The protein resides in the P-body. Functionally, required for gene silencing mediated by micro-RNAs (miRNAs). Silences both polyadenylated and deadenylated mRNAs. Required for miRNA-mediated translational repression and mRNA decay. Not required for miRNA target recognition. Necessary to initiate but not to maintain silencing. Promotes mRNA deadenylation through the recruitment of the CCR4-NOT and PAN complexes and promotes decapping by the DCP1-DCP2 complex. Dissociates from silenced mRNAs after deadenylation. Required for completion of nuclear divisions during early embryonic development. In Drosophila melanogaster (Fruit fly), this protein is Protein Gawky.